Consider the following 59-residue polypeptide: Photosystem II reaction center protein K (59 aa).

Residues 1–22 (MLNIFSLIGLNSALYSSSCFFA) constitute a propeptide that is removed on maturation. A helical membrane pass occupies residues 30 to 50 (FLSPIVDFMPVIPLLFFLLAF).

The protein belongs to the PsbK family. PSII is composed of 1 copy each of membrane proteins PsbA, PsbB, PsbC, PsbD, PsbE, PsbF, PsbH, PsbI, PsbJ, PsbK, PsbL, PsbM, PsbT, PsbX, PsbY, PsbZ, Psb30/Ycf12, at least 3 peripheral proteins of the oxygen-evolving complex and a large number of cofactors. It forms dimeric complexes.

It localises to the plastid. The protein resides in the chloroplast thylakoid membrane. One of the components of the core complex of photosystem II (PSII). PSII is a light-driven water:plastoquinone oxidoreductase that uses light energy to abstract electrons from H(2)O, generating O(2) and a proton gradient subsequently used for ATP formation. It consists of a core antenna complex that captures photons, and an electron transfer chain that converts photonic excitation into a charge separation. This chain is Photosystem II reaction center protein K, found in Silene latifolia (White campion).